The following is a 375-amino-acid chain: Alpha-2,8-sialyltransferase 8B (375 aa).

The Cytoplasmic segment spans residues 1–6 (MQLQFR). A helical; Signal-anchor for type II membrane protein transmembrane segment spans residues 7 to 23 (SWMLAALTLLVVFLIFA). Topologically, residues 24 to 375 (DISEIEEEIG…LTVGQCDGAT (352 aa)) are lumenal. 4 N-linked (GlcNAc...) asparagine glycosylation sites follow: Asn60, Asn72, Asn89, and Asn134. Intrachain disulfides connect Cys157–Cys307 and Cys171–Cys371. Residues Asn162 and Asn185 each contribute to the CMP-N-acetyl-beta-neuraminate site. Asn219 and Asn234 each carry an N-linked (GlcNAc...) asparagine glycan. Residues Thr294, Thr295, Gly296, Trp316, Tyr329, and His330 each contribute to the CMP-N-acetyl-beta-neuraminate site. Catalysis depends on His346, which acts as the Proton donor/acceptor.

Belongs to the glycosyltransferase 29 family. Post-translationally, autopolysialylated. Autopolysialylation is not a prerequisite for the polysialylation acitity, but enhances the polysialylation acitity.

It is found in the golgi apparatus membrane. The protein localises to the secreted. The protein resides in the cell membrane. The catalysed reaction is [N-acetyl-alpha-D-neuraminosyl-(2-&gt;8)](n) + CMP-N-acetyl-beta-neuraminate = [N-acetyl-alpha-D-neuraminosyl-(2-&gt;8)](n+1) + CMP + H(+). Its pathway is protein modification; protein glycosylation. Functionally, catalyzes the transfer of a sialic acid from a CMP-linked sialic acid donor onto a terminal alpha-2,3-, alpha-2,6-, or alpha-2,8-linked sialic acid of an N-linked glycan acceptor through alpha-2,8-linkages. Therefore, participates in polysialic acid synthesis on various sialylated N-acetyllactosaminyl oligosaccharides (alpha-2,3-, alpha-2,6-, or alpha-2,8-linked sialic acid), including NCAM1, NCAM1 N-glycans, FETUB N-glycans, and to a lesser extent sialylparagloboside (SPG) and AHSG, which does not require the initial addition of an alpha 2,8-sialic acid. However, does not exhibit sialic acid-polymerase activity. Catalyzes polysialic acid synthesis in the hippocampal on NCAM1 and supports neurite outgrowth. ST8SIA2-mediated polysialylation influences on oligodendrocyte differentiation and may promote the integrity of myelin and axons. This chain is Alpha-2,8-sialyltransferase 8B, found in Mus musculus (Mouse).